The following is a 225-amino-acid chain: uncharacterized protein (225 aa).

One can recognise a PCI domain in the interval 166-214; sequence LNSDVIKDKILAIIENVGEITYEELAEKINIPEEDLEKYLSELKESGDI.

This is an uncharacterized protein from Methanocaldococcus jannaschii (strain ATCC 43067 / DSM 2661 / JAL-1 / JCM 10045 / NBRC 100440) (Methanococcus jannaschii).